The primary structure comprises 448 residues: Exodeoxyribonuclease 7 large subunit (448 aa).

Belongs to the XseA family. As to quaternary structure, heterooligomer composed of large and small subunits.

The protein resides in the cytoplasm. It carries out the reaction Exonucleolytic cleavage in either 5'- to 3'- or 3'- to 5'-direction to yield nucleoside 5'-phosphates.. In terms of biological role, bidirectionally degrades single-stranded DNA into large acid-insoluble oligonucleotides, which are then degraded further into small acid-soluble oligonucleotides. The chain is Exodeoxyribonuclease 7 large subunit from Nitrosomonas europaea (strain ATCC 19718 / CIP 103999 / KCTC 2705 / NBRC 14298).